A 434-amino-acid polypeptide reads, in one-letter code: Serine--tRNA ligase (434 aa).

239–241 serves as a coordination point for L-serine; that stretch reads TAE. An ATP-binding site is contributed by 270–272; it reads RSE. E293 lines the L-serine pocket. 357–360 serves as a coordination point for ATP; it reads EISS. Residue S392 coordinates L-serine.

The protein belongs to the class-II aminoacyl-tRNA synthetase family. Type-1 seryl-tRNA synthetase subfamily. As to quaternary structure, homodimer. The tRNA molecule binds across the dimer.

The protein localises to the cytoplasm. It catalyses the reaction tRNA(Ser) + L-serine + ATP = L-seryl-tRNA(Ser) + AMP + diphosphate + H(+). The enzyme catalyses tRNA(Sec) + L-serine + ATP = L-seryl-tRNA(Sec) + AMP + diphosphate + H(+). The protein operates within aminoacyl-tRNA biosynthesis; selenocysteinyl-tRNA(Sec) biosynthesis; L-seryl-tRNA(Sec) from L-serine and tRNA(Sec): step 1/1. Its function is as follows. Catalyzes the attachment of serine to tRNA(Ser). Is also able to aminoacylate tRNA(Sec) with serine, to form the misacylated tRNA L-seryl-tRNA(Sec), which will be further converted into selenocysteinyl-tRNA(Sec). This chain is Serine--tRNA ligase, found in Cupriavidus necator (strain ATCC 17699 / DSM 428 / KCTC 22496 / NCIMB 10442 / H16 / Stanier 337) (Ralstonia eutropha).